The primary structure comprises 606 residues: MDSQRELAEELRLYQSTLLQDGLKDLLEEKKFIDCTLKAGDKSFPCHRLILSACSPYFREYFLSEIEEEKKKEMALDNVDPAILDLIIKYLYSASIDLNDGNVQDIFALSSRFQIPSVFTVCVSYLQKRLAPGNCLAILRLGLLLDCPRLAISAREFVSDRFVQICKEEDFMQLSPQELISVISNDSLNVEKEEVVFEAVMKWVRTDKENRAKNLSEVFDCIRFRLMAEKYFKDHVEKDDIIKSNPEVQKKIKVLKDAFAGKLPEPSKSAEKGGTGEVNGDVGDEDLLPGYLNDIPRHGMFVKDLILLVNDTAAVAYDPMENECYLTALAEQIPRNHSSIVTQQNQVYVVGGLYVDEENKDQPLQSYFFQLDNVSSEWVGLPPLPSARCLFGLGEVDDKIYVVAGKDLQTEASLDSVLCYDPVAAKWSEVKNLPIKVYGHNVISHNGMIYCLGGKTDDKKCTNRVFIYNPKKGDWKDLAPMKTPRSMFGVAIHKGKIVIAGGVTEDGLSASVEAFDLKTNKWEVMTEFPQERSSISLVSLAGSLYAIGGFAMIQLESKEFAPTEVNDIWKYEDDKKEWAGMLKEIRYASGASCLATRLNLFKLSKL.

Serine 3 carries the post-translational modification Phosphoserine. The region spanning 33 to 100 (IDCTLKAGDK…LYSASIDLND (68 aa)) is the BTB domain. Residues 135–237 (CLAILRLGLL…AEKYFKDHVE (103 aa)) form the BACK domain. 5 Kelch repeats span residues 346–398 (QVYV…EVDD), 399–447 (KIYV…SHNG), 448–495 (MIYC…IHKG), 497–542 (IVIA…SLAG), and 544–599 (LYAI…TRLN).

In terms of assembly, interacts with NRAP. Part of a complex that contains CUL3, RBX1 and KLHL41. Interacts with LASP1. Ubiquitinated by E3 ubiquitin ligase complex formed by CUL3 and RBX1 and probably targeted for proteasome-independent degradation. Quinone-induced oxidative stress increases its ubiquitination. Primarily expressed in skeletal muscle. Also found in heart and lung.

It is found in the cytoplasm. It localises to the cytoskeleton. The protein resides in the cell projection. The protein localises to the pseudopodium. Its subcellular location is the ruffle. It is found in the myofibril. It localises to the sarcomere. The protein resides in the m line. The protein localises to the sarcoplasmic reticulum membrane. Its subcellular location is the endoplasmic reticulum membrane. Involved in skeletal muscle development and differentiation. Regulates proliferation and differentiation of myoblasts and plays a role in myofibril assembly by promoting lateral fusion of adjacent thin fibrils into mature, wide myofibrils. Required for pseudopod elongation in transformed cells. This Rattus norvegicus (Rat) protein is Kelch-like protein 41 (Klhl41).